The chain runs to 428 residues: Serine--tRNA ligase (428 aa).

Thr-235–Glu-237 is an L-serine binding site. Arg-266–Glu-268 is a binding site for ATP. Glu-289 provides a ligand contact to L-serine. An ATP-binding site is contributed by Glu-353–Ser-356. An L-serine-binding site is contributed by Ser-389.

The protein belongs to the class-II aminoacyl-tRNA synthetase family. Type-1 seryl-tRNA synthetase subfamily. Homodimer. The tRNA molecule binds across the dimer.

It is found in the cytoplasm. It carries out the reaction tRNA(Ser) + L-serine + ATP = L-seryl-tRNA(Ser) + AMP + diphosphate + H(+). It catalyses the reaction tRNA(Sec) + L-serine + ATP = L-seryl-tRNA(Sec) + AMP + diphosphate + H(+). The protein operates within aminoacyl-tRNA biosynthesis; selenocysteinyl-tRNA(Sec) biosynthesis; L-seryl-tRNA(Sec) from L-serine and tRNA(Sec): step 1/1. Its function is as follows. Catalyzes the attachment of serine to tRNA(Ser). Is also able to aminoacylate tRNA(Sec) with serine, to form the misacylated tRNA L-seryl-tRNA(Sec), which will be further converted into selenocysteinyl-tRNA(Sec). This Shewanella baltica (strain OS185) protein is Serine--tRNA ligase.